The following is a 244-amino-acid chain: L-xylulose reductase (244 aa).

M1 is modified (N-acetylmethionine). Position 11 to 39 (11 to 39) interacts with NADP(+); it reads LVTGAGKGIGRSIVKALHAAGARVVAVSR. Position 21 is an omega-N-methylarginine (R21). The residue at position 46 (S46) is a Phosphoserine. S136 contributes to the substrate binding site. Catalysis depends on Y149, which acts as the Proton acceptor. The active site involves K153.

It belongs to the short-chain dehydrogenases/reductases (SDR) family. In terms of assembly, homotetramer.

It is found in the membrane. It carries out the reaction xylitol + NADP(+) = L-xylulose + NADPH + H(+). In terms of biological role, catalyzes the NADPH-dependent reduction of several pentoses, tetroses, trioses, alpha-dicarbonyl compounds and L-xylulose. Participates in the uronate cycle of glucose metabolism. May play a role in the water absorption and cellular osmoregulation in the proximal renal tubules by producing xylitol, an osmolyte, thereby preventing osmolytic stress from occurring in the renal tubules. The chain is L-xylulose reductase (DCXR) from Bos taurus (Bovine).